The chain runs to 400 residues: NAD-dependent protein deacetylase sirtuin-7 (400 aa).

The tract at residues 1–28 (MAAGGLSRSERKAAERVRRLREEQQRER) is disordered. A compositionally biased stretch (basic and acidic residues) spans 8 to 28 (RSERKAAERVRRLREEQQRER). One can recognise a Deacetylase sirtuin-type domain in the interval 82 to 329 (PEELQRKVRE…QLLMDELGLE (248 aa)). NAD(+) contacts are provided by residues 107-126 (GAGI…NGVW) and 167-170 (QNCD). His187 functions as the Proton acceptor in the catalytic mechanism. 4 residues coordinate Zn(2+): Cys195, Cys198, Cys225, and Cys228. NAD(+) is bound by residues 268–270 (GSS), 297–299 (NLQ), and Cys315. A disordered region spans residues 354–380 (SHSRKSLCRSREEPGPGDRGAPLSSAP). Arg388 carries the asymmetric dimethylarginine; alternate modification. Arg388 is subject to Omega-N-methylarginine; alternate.

This sequence belongs to the sirtuin family. Class IV subfamily. Interacts with UBTF and the RNA polymerase I complex. Interacts with components of the B-WICH complex, such as MYBBP1A, SMARCA5/SNF2H and BAZ1B/WSTF. Interacts with ELK4, leading to stabilization at target promoters for H3K18Ac deacetylation. Interacts with histone H2A and/or histone H2B. Interacts with DNMT1. Interacts with SIRT1. Zn(2+) is required as a cofactor. In terms of processing, phosphorylated during mitosis. Methylation at Arg-388 by PRMT6 inhibits the H3K18Ac histone deacetylase activity, promoting mitochondria biogenesis and maintaining mitochondria respiration. Post-translationally, ubiquitinated via 'Lys-63'-linked ubiquitin chains. Deubiquitinated by USP7, inhibiting the H3K18Ac histone deacetylase activity and regulating gluconeogenesis. Ubiquitinated by E3 ubiquitin-protein ligase complex containing FBXO7; leading to proteasomal degradation.

It is found in the nucleus. Its subcellular location is the nucleolus. The protein localises to the nucleoplasm. The protein resides in the chromosome. It localises to the cytoplasm. The enzyme catalyses N(6)-acetyl-L-lysyl-[protein] + NAD(+) + H2O = 2''-O-acetyl-ADP-D-ribose + nicotinamide + L-lysyl-[protein]. It carries out the reaction N(6)-glutaryl-L-lysyl-[protein] + NAD(+) + H2O = 2''-O-glutaryl-ADP-D-ribose + nicotinamide + L-lysyl-[protein]. The catalysed reaction is N(6)-succinyl-L-lysyl-[protein] + NAD(+) + H2O = 2''-O-succinyl-ADP-D-ribose + nicotinamide + L-lysyl-[protein]. It catalyses the reaction N(6)-propanoyl-L-lysyl-[protein] + NAD(+) + H2O = 3''-O-propanoyl-ADP-D-ribose + nicotinamide + L-lysyl-[protein]. The enzyme catalyses N(6)-decanoyl-L-lysyl-[protein] + NAD(+) + H2O = 2''-O-decanoyl-ADP-D-ribose + nicotinamide + L-lysyl-[protein]. NAD-dependent protein-lysine deacetylase and deacylase activities are activated by nucleic acids. Histone deacetylase activity is activated by DNA. Protein-lysine deacylase activity is activated by RNA. H3K18Ac histone deacetylase activity is inhibited by methylation at Arg-388. H3K18Ac histone deacetylase activity is inhibited by deubiquitination by USP7. In terms of biological role, NAD-dependent protein-lysine deacylase that can act both as a deacetylase or deacylase (desuccinylase, depropionylase, deglutarylase and dedecanoylase), depending on the context. Specifically mediates deacetylation of histone H3 at 'Lys-18' (H3K18Ac). In contrast to other histone deacetylases, displays strong preference for a specific histone mark, H3K18Ac, directly linked to control of gene expression. H3K18Ac is mainly present around the transcription start site of genes and has been linked to activation of nuclear hormone receptors; SIRT7 thereby acts as a transcription repressor. Moreover, H3K18 hypoacetylation has been reported as a marker of malignancy in various cancers and seems to maintain the transformed phenotype of cancer cells. Also able to mediate deacetylation of histone H3 at 'Lys-36' (H3K36Ac) in the context of nucleosomes. Also mediates deacetylation of non-histone proteins, such as ATM, CDK9, DDX21, DDB1, FBL, FKBP5/FKBP51, GABPB1, RAN, RRP9/U3-55K and POLR1E/PAF53. Enriched in nucleolus where it stimulates transcription activity of the RNA polymerase I complex. Acts by mediating the deacetylation of the RNA polymerase I subunit POLR1E/PAF53, thereby promoting the association of RNA polymerase I with the rDNA promoter region and coding region. In response to metabolic stress, SIRT7 is released from nucleoli leading to hyperacetylation of POLR1E/PAF53 and decreased RNA polymerase I transcription. Required to restore the transcription of ribosomal RNA (rRNA) at the exit from mitosis. Promotes pre-ribosomal RNA (pre-rRNA) cleavage at the 5'-terminal processing site by mediating deacetylation of RRP9/U3-55K, a core subunit of the U3 snoRNP complex. Mediates 'Lys-37' deacetylation of Ran, thereby regulating the nuclear export of NF-kappa-B subunit RELA/p65. Acts as a regulator of DNA damage repair by mediating deacetylation of ATM during the late stages of DNA damage response, promoting ATM dephosphorylation and deactivation. Suppresses the activity of the DCX (DDB1-CUL4-X-box) E3 ubiquitin-protein ligase complexes by mediating deacetylation of DDB1, which prevents the interaction between DDB1 and CUL4 (CUL4A or CUL4B). Activates RNA polymerase II transcription by mediating deacetylation of CDK9, thereby promoting 'Ser-2' phosphorylation of the C-terminal domain (CTD) of RNA polymerase II. Deacetylates FBL, promoting histone-glutamine methyltransferase activity of FBL. Acts as a regulator of mitochondrial function by catalyzing deacetylation of GABPB1. Regulates Akt/AKT1 activity by mediating deacetylation of FKBP5/FKBP51. Required to prevent R-loop-associated DNA damage and transcription-associated genomic instability by mediating deacetylation and subsequent activation of DDX21, thereby overcoming R-loop-mediated stalling of RNA polymerases. In addition to protein deacetylase activity, also acts as a protein-lysine deacylase. Acts as a protein depropionylase by mediating depropionylation of Osterix (SP7), thereby regulating bone formation by osteoblasts. Acts as a histone deglutarylase by mediating deglutarylation of histone H4 on 'Lys-91' (H4K91glu); a mark that destabilizes nucleosomes by promoting dissociation of the H2A-H2B dimers from nucleosomes. Acts as a histone desuccinylase: in response to DNA damage, recruited to DNA double-strand breaks (DSBs) and catalyzes desuccinylation of histone H3 on 'Lys-122' (H3K122succ), thereby promoting chromatin condensation and DSB repair. Also promotes DSB repair by promoting H3K18Ac deacetylation, regulating non-homologous end joining (NHEJ). Along with its role in DNA repair, required for chromosome synapsis during prophase I of female meiosis by catalyzing H3K18Ac deacetylation. Involved in transcriptional repression of LINE-1 retrotransposon via H3K18Ac deacetylation, and promotes their association with the nuclear lamina. Required to stabilize ribosomal DNA (rDNA) heterochromatin and prevent cellular senescence induced by rDNA instability. Acts as a negative regulator of SIRT1 by preventing autodeacetylation of SIRT1, restricting SIRT1 deacetylase activity. This is NAD-dependent protein deacetylase sirtuin-7 (SIRT7) from Bos taurus (Bovine).